Consider the following 92-residue polypeptide: N(2)-fixation sustaining protein CowN (92 aa).

This sequence belongs to the CowN family.

Functionally, is required to sustain N(2)-dependent growth in the presence of low levels of carbon monoxide (CO). Probably acts by protecting the N(2) fixation ability of the nitrogenase complex, which is inactivated in the presence of CO. The protein is N(2)-fixation sustaining protein CowN of Cereibacter sphaeroides (strain KD131 / KCTC 12085) (Rhodobacter sphaeroides).